We begin with the raw amino-acid sequence, 227 residues long: Cytochrome c oxidase subunit 2 (227 aa).

The Mitochondrial intermembrane segment spans residues 1-14; it reads MAYPFQLGLQDATS. Residues 15 to 45 traverse the membrane as a helical segment; the sequence is PIMEELTNFHDHTLMIVFLISSLVLYIISLM. Topologically, residues 46-59 are mitochondrial matrix; that stretch reads LTTKLTHTSTMDAQ. Residues 60 to 87 form a helical membrane-spanning segment; that stretch reads EVETIWTILPAAILVLIALPSLRILYMM. The Mitochondrial intermembrane segment spans residues 88–227; that stretch reads DEINNPVLTV…HFENWSASMV (140 aa). Residues His-161, Cys-196, Glu-198, Cys-200, His-204, and Met-207 each contribute to the Cu cation site. Glu-198 lines the Mg(2+) pocket.

It belongs to the cytochrome c oxidase subunit 2 family. As to quaternary structure, component of the cytochrome c oxidase (complex IV, CIV), a multisubunit enzyme composed of 14 subunits. The complex is composed of a catalytic core of 3 subunits MT-CO1, MT-CO2 and MT-CO3, encoded in the mitochondrial DNA, and 11 supernumerary subunits COX4I, COX5A, COX5B, COX6A, COX6B, COX6C, COX7A, COX7B, COX7C, COX8 and NDUFA4, which are encoded in the nuclear genome. The complex exists as a monomer or a dimer and forms supercomplexes (SCs) in the inner mitochondrial membrane with NADH-ubiquinone oxidoreductase (complex I, CI) and ubiquinol-cytochrome c oxidoreductase (cytochrome b-c1 complex, complex III, CIII), resulting in different assemblies (supercomplex SCI(1)III(2)IV(1) and megacomplex MCI(2)III(2)IV(2)). Found in a complex with TMEM177, COA6, COX18, COX20, SCO1 and SCO2. Interacts with TMEM177 in a COX20-dependent manner. Interacts with COX20. Interacts with COX16. Cu cation is required as a cofactor.

The protein localises to the mitochondrion inner membrane. The enzyme catalyses 4 Fe(II)-[cytochrome c] + O2 + 8 H(+)(in) = 4 Fe(III)-[cytochrome c] + 2 H2O + 4 H(+)(out). Its function is as follows. Component of the cytochrome c oxidase, the last enzyme in the mitochondrial electron transport chain which drives oxidative phosphorylation. The respiratory chain contains 3 multisubunit complexes succinate dehydrogenase (complex II, CII), ubiquinol-cytochrome c oxidoreductase (cytochrome b-c1 complex, complex III, CIII) and cytochrome c oxidase (complex IV, CIV), that cooperate to transfer electrons derived from NADH and succinate to molecular oxygen, creating an electrochemical gradient over the inner membrane that drives transmembrane transport and the ATP synthase. Cytochrome c oxidase is the component of the respiratory chain that catalyzes the reduction of oxygen to water. Electrons originating from reduced cytochrome c in the intermembrane space (IMS) are transferred via the dinuclear copper A center (CU(A)) of subunit 2 and heme A of subunit 1 to the active site in subunit 1, a binuclear center (BNC) formed by heme A3 and copper B (CU(B)). The BNC reduces molecular oxygen to 2 water molecules using 4 electrons from cytochrome c in the IMS and 4 protons from the mitochondrial matrix. The protein is Cytochrome c oxidase subunit 2 (MT-CO2) of Uromys caudimaculatus (Giant white-tailed rat).